We begin with the raw amino-acid sequence, 1052 residues long: Multidrug resistance protein MdtB (1052 aa).

Helical transmembrane passes span 15 to 37 (LFILRPVATTLFMIAILLAGIIG), 345 to 362 (FELLLAIALVVMVIYLFL), 367 to 389 (ATIIPSIAVPLSLVGTFAAMYFL), 396 to 418 (LTLMALTIATGFVVDDAIVVIEN), 438 to 460 (GEIGFTIISLTFSLIAVLIPLLF), 472 to 494 (FAVTLAVAILISAVVSLTLTPMM), 535 to 557 (HPWLTLSVAFSTLVLTVILYLLI), 867 to 889 (LWLIIAAIVAMYIVLGVLYESFI), 909 to 931 (LMLTGNELDVIAIIGIILLIGIV), 968 to 990 (ILMTTLAALFGALPLMLSTGVGA), and 1000 to 1022 (MVGGLIVSQVLTLFTTPVIYLLF). Residues 1032 to 1052 (KNRHRDEDIDSSELLNGQEPQ) are disordered.

It belongs to the resistance-nodulation-cell division (RND) (TC 2.A.6) family. MdtB subfamily. As to quaternary structure, part of a tripartite efflux system composed of MdtA, MdtB and MdtC. MdtB forms a heteromultimer with MdtC.

The protein localises to the cell inner membrane. The sequence is that of Multidrug resistance protein MdtB from Yersinia pestis.